The primary structure comprises 348 residues: Protein RecA (348 aa).

ATP is bound at residue 64–71; it reads GPESSGKT. The segment covering 326-335 has biased composition (basic and acidic residues); the sequence is EIDGTNKEPL. The tract at residues 326–348 is disordered; the sequence is EIDGTNKEPLDENEETLSLLDDE. The span at 336-348 shows a compositional bias: acidic residues; that stretch reads DENEETLSLLDDE.

This sequence belongs to the RecA family.

The protein localises to the cytoplasm. Functionally, can catalyze the hydrolysis of ATP in the presence of single-stranded DNA, the ATP-dependent uptake of single-stranded DNA by duplex DNA, and the ATP-dependent hybridization of homologous single-stranded DNAs. It interacts with LexA causing its activation and leading to its autocatalytic cleavage. The chain is Protein RecA from Listeria innocua serovar 6a (strain ATCC BAA-680 / CLIP 11262).